A 361-amino-acid chain; its full sequence is Phospho-N-acetylmuramoyl-pentapeptide-transferase (361 aa).

The next 10 helical transmembrane spans lie at 25–45 (TGGAVVTGALFVFLCGPWIID), 72–92 (TPTMGGLMILSGLTVGTVLWA), 95–115 (LNPYVWIVLAVTLGFGFVGFY), 135–155 (LLIEFAIAGAACFALVWLGRG), 169–189 (VVLNLGWYFVIFGAFVIVGAG), 200–220 (GLAIVPVMIAAASFGMISYLV), 240–260 (LAVLCGALLGAGLGFLWFNAP), 264–284 (IFMGDTGSLALGGMLGSIAVA), 289–309 (IVLAVIGGLFVLEAVSVIVQV), and 338–358 (QIVIRFWIIAVILALAGLSTL).

Belongs to the glycosyltransferase 4 family. MraY subfamily. It depends on Mg(2+) as a cofactor.

The protein resides in the cell inner membrane. It carries out the reaction UDP-N-acetyl-alpha-D-muramoyl-L-alanyl-gamma-D-glutamyl-meso-2,6-diaminopimeloyl-D-alanyl-D-alanine + di-trans,octa-cis-undecaprenyl phosphate = di-trans,octa-cis-undecaprenyl diphospho-N-acetyl-alpha-D-muramoyl-L-alanyl-D-glutamyl-meso-2,6-diaminopimeloyl-D-alanyl-D-alanine + UMP. The protein operates within cell wall biogenesis; peptidoglycan biosynthesis. In terms of biological role, catalyzes the initial step of the lipid cycle reactions in the biosynthesis of the cell wall peptidoglycan: transfers peptidoglycan precursor phospho-MurNAc-pentapeptide from UDP-MurNAc-pentapeptide onto the lipid carrier undecaprenyl phosphate, yielding undecaprenyl-pyrophosphoryl-MurNAc-pentapeptide, known as lipid I. This chain is Phospho-N-acetylmuramoyl-pentapeptide-transferase, found in Rhodopseudomonas palustris (strain HaA2).